Here is a 158-residue protein sequence, read N- to C-terminus: EOLA-like protein (158 aa).

Positions 6–92 constitute an ASCH domain; it reads LSFRQPYAGF…IAGLVDIGET (87 aa).

This sequence belongs to the EOLA family.

This is EOLA-like protein from Pongo abelii (Sumatran orangutan).